The chain runs to 187 residues: Signal peptidase complex catalytic subunit SEC11 (187 aa).

The Cytoplasmic portion of the chain corresponds to 1 to 18; that stretch reads MLSSLSPYMANPRNTLSQ. A helical; Signal-anchor for type II membrane protein membrane pass occupies residues 19-39; sequence VLNFGLVLSSAFMVWKALSVI. The Lumenal segment spans residues 40–187; the sequence is TNSASPVVVV…MGLMVMLQRE (148 aa). Active-site charge relay system residues include Ser-53 and His-92. A glycan (N-linked (GlcNAc...) asparagine) is linked at Asn-125. Asp-129 acts as the Charge relay system in catalysis. Residues 173-184 form a C-terminal short (CTS) helix region; it reads VLLGFMGLMVML.

The protein belongs to the peptidase S26B family. As to quaternary structure, component of the signal peptidase complex (SPC) composed of a catalytic subunit SEC11 and three accessory subunits SPC1, SPC2 and SPC3. The complex induces a local thinning of the ER membrane which is used to measure the length of the signal peptide (SP) h-region of protein substrates. This ensures the selectivity of the complex towards h-regions shorter than 18-20 amino acids. SPC associates with the translocon complex.

Its subcellular location is the endoplasmic reticulum membrane. It catalyses the reaction Cleavage of hydrophobic, N-terminal signal or leader sequences from secreted and periplasmic proteins.. In terms of biological role, catalytic component of the signal peptidase complex (SPC) which catalyzes the cleavage of N-terminal signal sequences from nascent proteins as they are translocated into the lumen of the endoplasmic reticulum. Specifically cleaves N-terminal signal peptides that contain a hydrophobic alpha-helix (h-region) shorter than 18-20 amino acids. This chain is Signal peptidase complex catalytic subunit SEC11 (SEC11), found in Ajellomyces capsulatus (strain NAm1 / WU24) (Darling's disease fungus).